Consider the following 913-residue polypeptide: Alanine--tRNA ligase (913 aa).

Zn(2+)-binding residues include His600, His604, Cys703, and His707.

The protein belongs to the class-II aminoacyl-tRNA synthetase family. The cofactor is Zn(2+).

It localises to the cytoplasm. It catalyses the reaction tRNA(Ala) + L-alanine + ATP = L-alanyl-tRNA(Ala) + AMP + diphosphate. Catalyzes the attachment of alanine to tRNA(Ala) in a two-step reaction: alanine is first activated by ATP to form Ala-AMP and then transferred to the acceptor end of tRNA(Ala). Also edits incorrectly charged Ser-tRNA(Ala) and Gly-tRNA(Ala) via its editing domain. The chain is Alanine--tRNA ligase from Methanothrix thermoacetophila (strain DSM 6194 / JCM 14653 / NBRC 101360 / PT) (Methanosaeta thermophila).